We begin with the raw amino-acid sequence, 505 residues long: Deoxyguanosinetriphosphate triphosphohydrolase (505 aa).

One can recognise an HD domain in the interval 66 to 273 (RLTHSMEVQQ…MEAADDISYC (208 aa)).

This sequence belongs to the dGTPase family. Type 1 subfamily. In terms of assembly, homotetramer. Requires Mg(2+) as cofactor.

It carries out the reaction dGTP + H2O = 2'-deoxyguanosine + triphosphate + H(+). In terms of biological role, dGTPase preferentially hydrolyzes dGTP over the other canonical NTPs. The chain is Deoxyguanosinetriphosphate triphosphohydrolase from Escherichia coli O127:H6 (strain E2348/69 / EPEC).